The primary structure comprises 605 residues: Glucose-6-phosphate isomerase (605 aa).

The active-site Proton donor is the Glu-410. Catalysis depends on residues His-441 and Lys-569.

Belongs to the GPI family.

The protein localises to the cytoplasm. The enzyme catalyses alpha-D-glucose 6-phosphate = beta-D-fructose 6-phosphate. It participates in carbohydrate degradation; glycolysis; D-glyceraldehyde 3-phosphate and glycerone phosphate from D-glucose: step 2/4. This is Glucose-6-phosphate isomerase (PGI) from Leishmania mexicana.